Reading from the N-terminus, the 424-residue chain is Arogenate dehydratase 3, chloroplastic (424 aa).

A chloroplast-targeting transit peptide spans 1-24 (MRTLLPSHTPATVTTAARRRHVIH). The segment covering 57–71 (EQSESLSSNSNGSSS) has biased composition (low complexity). Residues 57 to 77 (EQSESLSSNSNGSSSYHVSAV) are disordered. One can recognise a Prephenate dehydratase domain in the interval 122-299 (RVAYQGVPGA…NVTRFVMLAR (178 aa)). The ACT domain occupies 313-404 (SIVFAHEKGT…SFLRVLGSYP (92 aa)).

As to quaternary structure, may interact with GPA1. In terms of tissue distribution, expressed in roots, leaves, stems, flowers and siliques.

Its subcellular location is the plastid. It localises to the chloroplast stroma. The catalysed reaction is L-arogenate + H(+) = L-phenylalanine + CO2 + H2O. It participates in amino-acid biosynthesis; L-phenylalanine biosynthesis; L-phenylalanine from L-arogenate: step 1/1. Converts the prephenate produced from the shikimate-chorismate pathway into phenylalanine. Together with GCR1 and GPA1, required for blue light-mediated synthesis of phenylpyruvate and subsequently of phenylalanine (Phe), in etiolated seedlings. The polypeptide is Arogenate dehydratase 3, chloroplastic (Arabidopsis thaliana (Mouse-ear cress)).